The chain runs to 289 residues: Formamidopyrimidine-DNA glycosylase (289 aa).

The active-site Schiff-base intermediate with DNA is the Pro-2. The active-site Proton donor is Glu-3. Lys-60 (proton donor; for beta-elimination activity) is an active-site residue. 3 residues coordinate DNA: His-94, Arg-126, and Arg-167. The FPG-type zinc-finger motif lies at 252–287 (QVYGKPAGTPCPRCGTGLARIRIAGRSSVFCPRCQP). Arg-277 serves as the catalytic Proton donor; for delta-elimination activity.

This sequence belongs to the FPG family. In terms of assembly, monomer. Zn(2+) serves as cofactor.

It catalyses the reaction Hydrolysis of DNA containing ring-opened 7-methylguanine residues, releasing 2,6-diamino-4-hydroxy-5-(N-methyl)formamidopyrimidine.. The enzyme catalyses 2'-deoxyribonucleotide-(2'-deoxyribose 5'-phosphate)-2'-deoxyribonucleotide-DNA = a 3'-end 2'-deoxyribonucleotide-(2,3-dehydro-2,3-deoxyribose 5'-phosphate)-DNA + a 5'-end 5'-phospho-2'-deoxyribonucleoside-DNA + H(+). Involved in base excision repair of DNA damaged by oxidation or by mutagenic agents. Acts as a DNA glycosylase that recognizes and removes damaged bases. Has a preference for oxidized purines, such as 7,8-dihydro-8-oxoguanine (8-oxoG). Has AP (apurinic/apyrimidinic) lyase activity and introduces nicks in the DNA strand. Cleaves the DNA backbone by beta-delta elimination to generate a single-strand break at the site of the removed base with both 3'- and 5'-phosphates. The chain is Formamidopyrimidine-DNA glycosylase from Thermomicrobium roseum (strain ATCC 27502 / DSM 5159 / P-2).